We begin with the raw amino-acid sequence, 505 residues long: Histidine ammonia-lyase (505 aa).

Residues 141–143 (ASG) constitute a cross-link (5-imidazolinone (Ala-Gly)). Position 142 is a 2,3-didehydroalanine (Ser) (Ser142).

It belongs to the PAL/histidase family. In terms of processing, contains an active site 4-methylidene-imidazol-5-one (MIO), which is formed autocatalytically by cyclization and dehydration of residues Ala-Ser-Gly.

Its subcellular location is the cytoplasm. The enzyme catalyses L-histidine = trans-urocanate + NH4(+). Its pathway is amino-acid degradation; L-histidine degradation into L-glutamate; N-formimidoyl-L-glutamate from L-histidine: step 1/3. This is Histidine ammonia-lyase from Bacillus cereus (strain ZK / E33L).